We begin with the raw amino-acid sequence, 510 residues long: Bifunctional purine biosynthesis protein PurH (510 aa).

The MGS-like domain maps to 1-142 (MRALLSVSDK…KNYKDVMVLC (142 aa)).

It belongs to the PurH family.

It carries out the reaction (6R)-10-formyltetrahydrofolate + 5-amino-1-(5-phospho-beta-D-ribosyl)imidazole-4-carboxamide = 5-formamido-1-(5-phospho-D-ribosyl)imidazole-4-carboxamide + (6S)-5,6,7,8-tetrahydrofolate. It catalyses the reaction IMP + H2O = 5-formamido-1-(5-phospho-D-ribosyl)imidazole-4-carboxamide. The protein operates within purine metabolism; IMP biosynthesis via de novo pathway; 5-formamido-1-(5-phospho-D-ribosyl)imidazole-4-carboxamide from 5-amino-1-(5-phospho-D-ribosyl)imidazole-4-carboxamide (10-formyl THF route): step 1/1. It functions in the pathway purine metabolism; IMP biosynthesis via de novo pathway; IMP from 5-formamido-1-(5-phospho-D-ribosyl)imidazole-4-carboxamide: step 1/1. This Campylobacter jejuni subsp. jejuni serotype O:2 (strain ATCC 700819 / NCTC 11168) protein is Bifunctional purine biosynthesis protein PurH.